Consider the following 377-residue polypeptide: O-phospho-L-seryl-tRNA:Cys-tRNA synthase (377 aa).

Residues 83–84 (AR), N188, and 211–213 (SGH) each bind pyridoxal 5'-phosphate. K214 bears the N6-(pyridoxal phosphate)lysine mark.

The protein belongs to the SepCysS family. In terms of assembly, homodimer. Interacts with SepRS. Requires pyridoxal 5'-phosphate as cofactor.

The catalysed reaction is O-phospho-L-seryl-tRNA(Cys) + hydrogen sulfide + H(+) = L-cysteinyl-tRNA(Cys) + phosphate. Functionally, converts O-phospho-L-seryl-tRNA(Cys) (Sep-tRNA(Cys)) to L-cysteinyl-tRNA(Cys) (Cys-tRNA(Cys)). The protein is O-phospho-L-seryl-tRNA:Cys-tRNA synthase of Methanothermobacter thermautotrophicus (strain ATCC 29096 / DSM 1053 / JCM 10044 / NBRC 100330 / Delta H) (Methanobacterium thermoautotrophicum).